The following is a 539-amino-acid chain: Cytochrome P450 monooxygenase tenB (539 aa).

The helical transmembrane segment at 13–33 threads the bilayer; it reads LGYYEKVAGVLGFLSIALLFW. The segment at 439 to 460 is disordered; the sequence is PFRFSRASKDDDDDGKSTSSHA. A heme-binding site is contributed by Cys481.

It belongs to the cytochrome P450 family. It depends on heme as a cofactor.

Its subcellular location is the membrane. It participates in secondary metabolite biosynthesis. Cytochrome P450 monooxygenase; part of the gene cluster that mediates the biosynthesis of tenellin-type 2-pyridones, iron-chelating compounds involved in iron stress tolerance, competition with the natural competitor fungus Metarhizium robertsii and insect hosts infection. TenB catalyzes the selective N-hydroxylation of the 2-pyridone nitrogen of yield tellinin and 15-hydroxytellenin (15-HT), respectively. The pathway begins with the assembly of the polyketide-amino acid backbone by the hybrid PKS-NRPS tenS with the help of the enoyl reductase tenC. These enzymes catalyze the synthesis of the pyrrolidine-2-dione intermediates pretellinin A, 11-hydropretellenin A, 12-hydropretellenin A, 13-hydropretellenin A, 14-hydropretellenin A, 12-oxopretellenin A and prototellinin D. The cytochrome P450 monooxygenase tenA then catalyzes an oxidative ring expansion of pretenellin A and 14-hydropretellenin A to form the 2-pyridone core, leading to pretenellin B and pyridovericin, respectively. The cytochrome P450 monooxygenase tenB is then required for the selective N-hydroxylation of the 2-pyridone nitrogen of yield tellinin and 15-hydroxytellenin (15-HT), respectively. The UDP-glucosyltransferase GT1 and the methyltransferase MT1, located outside the tenS gene cluster, contribute to the stepwise glycosylation and methylation of 15-HT to obtain the glycoside pyridovericin-N-O-(4-O-methyl-beta-D-glucopyranoside) (PMGP). Additional related compounds such as 1-O-methyl-15-HT, (8Z)-1-O-methyl-15-HT, and O-methyltenellin A are also produced but the enzymes involved in their biosynthesis have still to be determined. This is Cytochrome P450 monooxygenase tenB from Beauveria bassiana (White muscardine disease fungus).